A 301-amino-acid chain; its full sequence is Sulfate adenylyltransferase subunit 2 (301 aa).

Residues 279–301 (RQGRMIDHDSSGSMEEKKKQGYF) are disordered.

It belongs to the PAPS reductase family. CysD subfamily. Heterodimer composed of CysD, the smaller subunit, and CysN.

The enzyme catalyses sulfate + ATP + H(+) = adenosine 5'-phosphosulfate + diphosphate. It functions in the pathway sulfur metabolism; hydrogen sulfide biosynthesis; sulfite from sulfate: step 1/3. Functionally, with CysN forms the ATP sulfurylase (ATPS) that catalyzes the adenylation of sulfate producing adenosine 5'-phosphosulfate (APS) and diphosphate, the first enzymatic step in sulfur assimilation pathway. APS synthesis involves the formation of a high-energy phosphoric-sulfuric acid anhydride bond driven by GTP hydrolysis by CysN coupled to ATP hydrolysis by CysD. This chain is Sulfate adenylyltransferase subunit 2, found in Marinomonas sp. (strain MWYL1).